An 87-amino-acid polypeptide reads, in one-letter code: Small ribosomal subunit protein uS17 (87 aa).

This sequence belongs to the universal ribosomal protein uS17 family. As to quaternary structure, part of the 30S ribosomal subunit.

In terms of biological role, one of the primary rRNA binding proteins, it binds specifically to the 5'-end of 16S ribosomal RNA. The protein is Small ribosomal subunit protein uS17 of Thioalkalivibrio sulfidiphilus (strain HL-EbGR7).